Reading from the N-terminus, the 362-residue chain is Mitochondrial distribution and morphology protein 12 (362 aa).

The SMP-LTD domain occupies 1 to 361; sequence MSFDINWSQL…WPSWLCFDMS (361 aa). 2 disordered regions span residues 65 to 141 and 170 to 207; these read DFYE…AATP and TPSG…SKRG. Polar residues-rich tracts occupy residues 106-119 and 170-187; these read VTLS…TQFA and TPSG…MRTG. Residues 192-201 are compositionally biased toward low complexity; the sequence is PISNTPISSS.

Belongs to the MDM12 family. Component of the ER-mitochondria encounter structure (ERMES) or MDM complex, composed of MMM1, MDM10, MDM12 and MDM34. An MMM1 homodimer associates with one molecule of MDM12 on each side in a pairwise head-to-tail manner, and the SMP-LTD domains of MMM1 and MDM12 generate a continuous hydrophobic tunnel for phospholipid trafficking.

Its subcellular location is the mitochondrion outer membrane. The protein localises to the endoplasmic reticulum membrane. In terms of biological role, component of the ERMES/MDM complex, which serves as a molecular tether to connect the endoplasmic reticulum (ER) and mitochondria. Components of this complex are involved in the control of mitochondrial shape and protein biogenesis, and function in nonvesicular lipid trafficking between the ER and mitochondria. MDM12 is required for the interaction of the ER-resident membrane protein MMM1 and the outer mitochondrial membrane-resident beta-barrel protein MDM10. The MDM12-MMM1 subcomplex functions in the major beta-barrel assembly pathway that is responsible for biogenesis of all mitochondrial outer membrane beta-barrel proteins, and acts in a late step after the SAM complex. The MDM10-MDM12-MMM1 subcomplex further acts in the TOM40-specific pathway after the action of the MDM12-MMM1 complex. Essential for establishing and maintaining the structure of mitochondria and maintenance of mtDNA nucleoids. This is Mitochondrial distribution and morphology protein 12 from Meyerozyma guilliermondii (strain ATCC 6260 / CBS 566 / DSM 6381 / JCM 1539 / NBRC 10279 / NRRL Y-324) (Yeast).